The following is a 78-amino-acid chain: Small ribosomal subunit protein bS18 (78 aa).

It belongs to the bacterial ribosomal protein bS18 family. Part of the 30S ribosomal subunit. Forms a tight heterodimer with protein bS6.

Its function is as follows. Binds as a heterodimer with protein bS6 to the central domain of the 16S rRNA, where it helps stabilize the platform of the 30S subunit. The polypeptide is Small ribosomal subunit protein bS18 (Rhodospirillum rubrum (strain ATCC 11170 / ATH 1.1.1 / DSM 467 / LMG 4362 / NCIMB 8255 / S1)).